The chain runs to 308 residues: D-alanine--D-alanine ligase (308 aa).

The ATP-grasp domain occupies 105–302 (KAIFRSLGLA…FPDLCERILD (198 aa)). 133–188 (DLPFGLPCVVKPAGEGSSVGVHLVNEAAELGPACRDAASHAGDVIVERYVKGTEVD) serves as a coordination point for ATP. Positions 256, 269, and 271 each coordinate Mg(2+).

This sequence belongs to the D-alanine--D-alanine ligase family. It depends on Mg(2+) as a cofactor. Mn(2+) is required as a cofactor.

It is found in the cytoplasm. The enzyme catalyses 2 D-alanine + ATP = D-alanyl-D-alanine + ADP + phosphate + H(+). The protein operates within cell wall biogenesis; peptidoglycan biosynthesis. Cell wall formation. The chain is D-alanine--D-alanine ligase from Anaeromyxobacter dehalogenans (strain 2CP-1 / ATCC BAA-258).